The sequence spans 208 residues: Uracil phosphoribosyltransferase (208 aa).

Residues arginine 78, arginine 103, and aspartate 130–serine 138 contribute to the 5-phospho-alpha-D-ribose 1-diphosphate site. Residues isoleucine 193 and glycine 198–alanine 200 each bind uracil. Residue aspartate 199 participates in 5-phospho-alpha-D-ribose 1-diphosphate binding.

The protein belongs to the UPRTase family. The cofactor is Mg(2+).

The catalysed reaction is UMP + diphosphate = 5-phospho-alpha-D-ribose 1-diphosphate + uracil. It participates in pyrimidine metabolism; UMP biosynthesis via salvage pathway; UMP from uracil: step 1/1. Allosterically activated by GTP. In terms of biological role, catalyzes the conversion of uracil and 5-phospho-alpha-D-ribose 1-diphosphate (PRPP) to UMP and diphosphate. The sequence is that of Uracil phosphoribosyltransferase from Neisseria gonorrhoeae (strain ATCC 700825 / FA 1090).